The sequence spans 173 residues: Large ribosomal subunit protein uL10 (173 aa).

The protein belongs to the universal ribosomal protein uL10 family. In terms of assembly, part of the ribosomal stalk of the 50S ribosomal subunit. The N-terminus interacts with L11 and the large rRNA to form the base of the stalk. The C-terminus forms an elongated spine to which L12 dimers bind in a sequential fashion forming a multimeric L10(L12)X complex.

Functionally, forms part of the ribosomal stalk, playing a central role in the interaction of the ribosome with GTP-bound translation factors. This is Large ribosomal subunit protein uL10 from Bifidobacterium animalis subsp. lactis (strain AD011).